Reading from the N-terminus, the 305-residue chain is Homoserine kinase (305 aa).

Residue 90-100 (PLARGLGSSAS) coordinates ATP.

Belongs to the GHMP kinase family. Homoserine kinase subfamily.

It localises to the cytoplasm. It catalyses the reaction L-homoserine + ATP = O-phospho-L-homoserine + ADP + H(+). The protein operates within amino-acid biosynthesis; L-threonine biosynthesis; L-threonine from L-aspartate: step 4/5. Functionally, catalyzes the ATP-dependent phosphorylation of L-homoserine to L-homoserine phosphate. The sequence is that of Homoserine kinase from Staphylococcus haemolyticus (strain JCSC1435).